A 290-amino-acid chain; its full sequence is Serine protease 27 (290 aa).

The N-terminal stretch at M1 to A22 is a signal peptide. The propeptide at A23–R34 is activation peptide. The 243-residue stretch at M35–P277 folds into the Peptidase S1 domain. Residue N55 is glycosylated (N-linked (GlcNAc...) asparagine). The cysteines at positions 60 and 76 are disulfide-linked. H75 acts as the Charge relay system in catalysis. An N-linked (GlcNAc...) asparagine glycan is attached at N79. D124 serves as the catalytic Charge relay system. Cystine bridges form between C158-C235, C191-C214, and C225-C253. S229 functions as the Charge relay system in the catalytic mechanism.

The protein belongs to the peptidase S1 family. In terms of processing, N-glycosylated. In terms of tissue distribution, expressed predominantly in the pancreas.

It is found in the secreted. This chain is Serine protease 27 (PRSS27), found in Homo sapiens (Human).